The sequence spans 416 residues: Probable glucan 1,3-beta-glucosidase A (416 aa).

The N-terminal stretch at 1-22 (MFVESAKKALLALSLLAASAQA) is a signal peptide. Asn183 is a glycosylation site (N-linked (GlcNAc...) asparagine). The active-site Proton donor is Glu210. Intrachain disulfides connect Cys290–Cys415 and Cys316–Cys342. Catalysis depends on Glu308, which acts as the Nucleophile.

This sequence belongs to the glycosyl hydrolase 5 (cellulase A) family. In terms of assembly, monomer. The cofactor is Mn(2+).

It is found in the secreted. It catalyses the reaction Successive hydrolysis of beta-D-glucose units from the non-reducing ends of (1-&gt;3)-beta-D-glucans, releasing alpha-glucose.. Functionally, beta-glucanases participate in the metabolism of beta-glucan, the main structural component of the cell wall. It could also function biosynthetically as a transglycosylase. The sequence is that of Probable glucan 1,3-beta-glucosidase A (exgA) from Aspergillus niger (strain ATCC MYA-4892 / CBS 513.88 / FGSC A1513).